Here is a 145-residue protein sequence, read N- to C-terminus: Heat shock protein hsp-16.2 (145 aa).

Residues 32–137 (VCRISPSESS…QGRSIPIQQA (106 aa)) enclose the sHSP domain.

This sequence belongs to the small heat shock protein (HSP20) family.

The chain is Heat shock protein hsp-16.2 from Caenorhabditis elegans.